The following is a 356-amino-acid chain: Putative ankyrin repeat protein R599 (356 aa).

ANK repeat units lie at residues 111 to 143 (NDDILLCTAIINCSSECLLYLLDKGIPIDFCDN), 152 to 182 (RLEKYIYTTRKNKSSCDMLKIVIDRGGNVNT), 183 to 213 (HNYEPLYSAVNDNNFDKIKLLVENGANKLSD), 215 to 238 (KRKITNTNLEIFQYLIDNRVELEV), 239 to 266 (NFDDIFLQSIINDDSECMKLFIELGANI), and 267 to 298 (NSIPTLELTKIIINARHEILEILINYGLDINN).

The polypeptide is Putative ankyrin repeat protein R599 (Acanthamoeba polyphaga (Amoeba)).